We begin with the raw amino-acid sequence, 398 residues long: Stearoyl-[acyl-carrier-protein] 9-desaturase, chloroplastic (398 aa).

Residues 1 to 34 (MALKLNPLASQPYNFPSSARPPISTFRSPKFLCL) constitute a chloroplast transit peptide. Fe cation contacts are provided by Glu140, Glu178, His181, Glu231, Glu264, and His267.

Belongs to the fatty acid desaturase type 2 family. As to quaternary structure, homodimer. Fe(2+) serves as cofactor.

The protein resides in the plastid. It is found in the chloroplast. It carries out the reaction octadecanoyl-[ACP] + 2 reduced [2Fe-2S]-[ferredoxin] + O2 + 2 H(+) = (9Z)-octadecenoyl-[ACP] + 2 oxidized [2Fe-2S]-[ferredoxin] + 2 H2O. The protein operates within lipid metabolism; fatty acid metabolism. Converts stearoyl-ACP to oleoyl-ACP by introduction of a cis double bond between carbons 9 and 10 of the acyl chain. In Brassica napus (Rape), this protein is Stearoyl-[acyl-carrier-protein] 9-desaturase, chloroplastic.